A 312-amino-acid chain; its full sequence is Methionyl-tRNA formyltransferase (312 aa).

Residue Ser110–Pro113 coordinates (6S)-5,6,7,8-tetrahydrofolate.

It belongs to the Fmt family.

It catalyses the reaction L-methionyl-tRNA(fMet) + (6R)-10-formyltetrahydrofolate = N-formyl-L-methionyl-tRNA(fMet) + (6S)-5,6,7,8-tetrahydrofolate + H(+). Its function is as follows. Attaches a formyl group to the free amino group of methionyl-tRNA(fMet). The formyl group appears to play a dual role in the initiator identity of N-formylmethionyl-tRNA by promoting its recognition by IF2 and preventing the misappropriation of this tRNA by the elongation apparatus. The sequence is that of Methionyl-tRNA formyltransferase from Koribacter versatilis (strain Ellin345).